A 481-amino-acid polypeptide reads, in one-letter code: Small ribosomal subunit protein bS1 (481 aa).

S1 motif domains lie at 36-105 (GDIV…LSKK), 123-188 (DEAV…LSRR), 209-277 (GAIR…LSLK), and 294-363 (GQIV…LSLK). Residues 437 to 465 (ATEEAGHGSSEQPPASSTPSAKATGGSLA) are disordered. Residues 445–457 (SSEQPPASSTPSA) show a composition bias toward polar residues.

This sequence belongs to the bacterial ribosomal protein bS1 family.

Binds mRNA; thus facilitating recognition of the initiation point. It is needed to translate mRNA with a short Shine-Dalgarno (SD) purine-rich sequence. The polypeptide is Small ribosomal subunit protein bS1 (rpsA) (Mycobacterium leprae (strain TN)).